The chain runs to 286 residues: Phosphoribosylaminoimidazole-succinocarboxamide synthase (286 aa).

The protein belongs to the SAICAR synthetase family.

It carries out the reaction 5-amino-1-(5-phospho-D-ribosyl)imidazole-4-carboxylate + L-aspartate + ATP = (2S)-2-[5-amino-1-(5-phospho-beta-D-ribosyl)imidazole-4-carboxamido]succinate + ADP + phosphate + 2 H(+). Its pathway is purine metabolism; IMP biosynthesis via de novo pathway; 5-amino-1-(5-phospho-D-ribosyl)imidazole-4-carboxamide from 5-amino-1-(5-phospho-D-ribosyl)imidazole-4-carboxylate: step 1/2. This Mannheimia succiniciproducens (strain KCTC 0769BP / MBEL55E) protein is Phosphoribosylaminoimidazole-succinocarboxamide synthase.